Here is a 304-residue protein sequence, read N- to C-terminus: Porphobilinogen deaminase (304 aa).

C241 carries the S-(dipyrrolylmethanemethyl)cysteine modification.

It belongs to the HMBS family. Monomer. Dipyrromethane serves as cofactor.

It carries out the reaction 4 porphobilinogen + H2O = hydroxymethylbilane + 4 NH4(+). It functions in the pathway porphyrin-containing compound metabolism; protoporphyrin-IX biosynthesis; coproporphyrinogen-III from 5-aminolevulinate: step 2/4. In terms of biological role, tetrapolymerization of the monopyrrole PBG into the hydroxymethylbilane pre-uroporphyrinogen in several discrete steps. This chain is Porphobilinogen deaminase, found in Ruthia magnifica subsp. Calyptogena magnifica.